We begin with the raw amino-acid sequence, 252 residues long: tRNA (guanine-N(7)-)-methyltransferase (252 aa).

Positions 51, 76, 103, and 125 each coordinate S-adenosyl-L-methionine. Residue Asp-125 is part of the active site. Residues Lys-129, Asp-159, and 199–202 contribute to the substrate site; that span reads TYYE.

This sequence belongs to the class I-like SAM-binding methyltransferase superfamily. TrmB family.

The catalysed reaction is guanosine(46) in tRNA + S-adenosyl-L-methionine = N(7)-methylguanosine(46) in tRNA + S-adenosyl-L-homocysteine. Its pathway is tRNA modification; N(7)-methylguanine-tRNA biosynthesis. Functionally, catalyzes the formation of N(7)-methylguanine at position 46 (m7G46) in tRNA. This is tRNA (guanine-N(7)-)-methyltransferase from Bacteroides thetaiotaomicron (strain ATCC 29148 / DSM 2079 / JCM 5827 / CCUG 10774 / NCTC 10582 / VPI-5482 / E50).